The primary structure comprises 694 residues: Elongation factor G (694 aa).

Residues 8-287 (EDYRNFGIMA…AVVEFLPAPT (280 aa)) form the tr-type G domain. GTP is bound by residues 17 to 24 (AHIDAGKT), 86 to 90 (DTPGH), and 140 to 143 (NKMD).

This sequence belongs to the TRAFAC class translation factor GTPase superfamily. Classic translation factor GTPase family. EF-G/EF-2 subfamily.

The protein localises to the cytoplasm. Functionally, catalyzes the GTP-dependent ribosomal translocation step during translation elongation. During this step, the ribosome changes from the pre-translocational (PRE) to the post-translocational (POST) state as the newly formed A-site-bound peptidyl-tRNA and P-site-bound deacylated tRNA move to the P and E sites, respectively. Catalyzes the coordinated movement of the two tRNA molecules, the mRNA and conformational changes in the ribosome. The protein is Elongation factor G of Brucella canis (strain ATCC 23365 / NCTC 10854 / RM-666).